The following is a 171-amino-acid chain: Crossover junction endodeoxyribonuclease RuvC (171 aa).

Catalysis depends on residues Asp-11, Glu-71, and Asp-143. Residues Asp-11, Glu-71, and Asp-143 each coordinate Mg(2+).

Belongs to the RuvC family. As to quaternary structure, homodimer which binds Holliday junction (HJ) DNA. The HJ becomes 2-fold symmetrical on binding to RuvC with unstacked arms; it has a different conformation from HJ DNA in complex with RuvA. In the full resolvosome a probable DNA-RuvA(4)-RuvB(12)-RuvC(2) complex forms which resolves the HJ. It depends on Mg(2+) as a cofactor.

The protein localises to the cytoplasm. The catalysed reaction is Endonucleolytic cleavage at a junction such as a reciprocal single-stranded crossover between two homologous DNA duplexes (Holliday junction).. Functionally, the RuvA-RuvB-RuvC complex processes Holliday junction (HJ) DNA during genetic recombination and DNA repair. Endonuclease that resolves HJ intermediates. Cleaves cruciform DNA by making single-stranded nicks across the HJ at symmetrical positions within the homologous arms, yielding a 5'-phosphate and a 3'-hydroxyl group; requires a central core of homology in the junction. The consensus cleavage sequence is 5'-(A/T)TT(C/G)-3'. Cleavage occurs on the 3'-side of the TT dinucleotide at the point of strand exchange. HJ branch migration catalyzed by RuvA-RuvB allows RuvC to scan DNA until it finds its consensus sequence, where it cleaves and resolves the cruciform DNA. This chain is Crossover junction endodeoxyribonuclease RuvC, found in Chelativorans sp. (strain BNC1).